Consider the following 488-residue polypeptide: Ribulose bisphosphate carboxylase large chain (488 aa).

Substrate is bound by residues Asn-127 and Thr-177. Lys-179 acts as the Proton acceptor in catalysis. Substrate is bound at residue Lys-181. Mg(2+)-binding residues include Lys-205, Asp-207, and Glu-208. N6-carboxylysine is present on Lys-205. His-297 (proton acceptor) is an active-site residue. Arg-298, His-330, and Ser-382 together coordinate substrate.

It belongs to the RuBisCO large chain family. Type I subfamily. As to quaternary structure, heterohexadecamer of 8 large chains and 8 small chains. It depends on Mg(2+) as a cofactor.

Its subcellular location is the plastid. It localises to the chloroplast. The enzyme catalyses 2 (2R)-3-phosphoglycerate + 2 H(+) = D-ribulose 1,5-bisphosphate + CO2 + H2O. It catalyses the reaction D-ribulose 1,5-bisphosphate + O2 = 2-phosphoglycolate + (2R)-3-phosphoglycerate + 2 H(+). Its function is as follows. RuBisCO catalyzes two reactions: the carboxylation of D-ribulose 1,5-bisphosphate, the primary event in carbon dioxide fixation, as well as the oxidative fragmentation of the pentose substrate in the photorespiration process. Both reactions occur simultaneously and in competition at the same active site. The polypeptide is Ribulose bisphosphate carboxylase large chain (Antithamnion sp. (Red alga)).